Consider the following 131-residue polypeptide: UPF0102 protein YraN (131 aa).

A compositionally biased stretch (polar residues) spans 1-19 (MATVPTRSGSPRQLTTKQT). The tract at residues 1–21 (MATVPTRSGSPRQLTTKQTGD) is disordered.

The protein belongs to the UPF0102 family.

In Escherichia coli O7:K1 (strain IAI39 / ExPEC), this protein is UPF0102 protein YraN.